Reading from the N-terminus, the 205-residue chain is Putative 3-methyladenine DNA glycosylase (205 aa).

This sequence belongs to the DNA glycosylase MPG family.

The protein is Putative 3-methyladenine DNA glycosylase of Mycolicibacterium paratuberculosis (strain ATCC BAA-968 / K-10) (Mycobacterium paratuberculosis).